The chain runs to 39 residues: Bacteriocin SRCAM 602 (39 aa).

This sequence belongs to the bacteriocin class IIA/YGNGV family.

It localises to the secreted. Its function is as follows. Bacteriocin with antibacterial activity against C.jejuni. This chain is Bacteriocin SRCAM 602, found in Paenibacillus polymyxa (Bacillus polymyxa).